Consider the following 237-residue polypeptide: Eukaryotic translation initiation factor 3 subunit J (237 aa).

A disordered region spans residues 20–64 (ANNINKWEGEDDDEDVKESWEDEEEKKDEEKPTKTEAPAKTKPNK). Over residues 28–46 (GEDDDEDVKESWEDEEEKK) the composition is skewed to acidic residues. Over residues 47–58 (DEEKPTKTEAPA) the composition is skewed to basic and acidic residues. Residues 63–115 (NKVLKAKLLEQECLEKEEEAKRLANMSTEEKLAEKLRLQKIQEESDLKSALET) adopt a coiled-coil conformation.

It belongs to the eIF-3 subunit J family. Component of the eukaryotic translation initiation factor 3 (eIF-3) complex. The eIF-3 complex interacts with pix.

It localises to the cytoplasm. Functionally, component of the eukaryotic translation initiation factor 3 (eIF-3) complex, which is involved in protein synthesis of a specialized repertoire of mRNAs and, together with other initiation factors, stimulates binding of mRNA and methionyl-tRNAi to the 40S ribosome. The eIF-3 complex specifically targets and initiates translation of a subset of mRNAs involved in cell proliferation. The sequence is that of Eukaryotic translation initiation factor 3 subunit J from Drosophila grimshawi (Hawaiian fruit fly).